A 628-amino-acid chain; its full sequence is tRNA 5-methylaminomethyl-2-thiouridine biosynthesis bifunctional protein MnmC (628 aa).

The segment at 1–237 is tRNA (mnm(5)s(2)U34)-methyltransferase; sequence MSSYSPLVPP…KWHMTVGVRE (237 aa). Positions 265-628 are FAD-dependent cmnm(5)s(2)U34 oxidoreductase; sequence VGGGLAGAGI…ADLLAAVAPR (364 aa).

The protein in the N-terminal section; belongs to the methyltransferase superfamily. tRNA (mnm(5)s(2)U34)-methyltransferase family. This sequence in the C-terminal section; belongs to the DAO family. FAD serves as cofactor.

It is found in the cytoplasm. It catalyses the reaction 5-aminomethyl-2-thiouridine(34) in tRNA + S-adenosyl-L-methionine = 5-methylaminomethyl-2-thiouridine(34) in tRNA + S-adenosyl-L-homocysteine + H(+). Its function is as follows. Catalyzes the last two steps in the biosynthesis of 5-methylaminomethyl-2-thiouridine (mnm(5)s(2)U) at the wobble position (U34) in tRNA. Catalyzes the FAD-dependent demodification of cmnm(5)s(2)U34 to nm(5)s(2)U34, followed by the transfer of a methyl group from S-adenosyl-L-methionine to nm(5)s(2)U34, to form mnm(5)s(2)U34. This chain is tRNA 5-methylaminomethyl-2-thiouridine biosynthesis bifunctional protein MnmC, found in Bordetella petrii (strain ATCC BAA-461 / DSM 12804 / CCUG 43448).